The sequence spans 205 residues: Transcriptional regulator GfcR (205 aa).

The protein belongs to the purine/pyrimidine phosphoribosyltransferase family. GfcR subfamily.

In Methanococcus maripaludis (strain C5 / ATCC BAA-1333), this protein is Transcriptional regulator GfcR.